Reading from the N-terminus, the 174-residue chain is Serine protease 2 (174 aa).

Residues C15 and C36 are joined by a disulfide bond. Residues H35, D65, and S147 each act as charge relay system in the active site. C141 and C168 are disulfide-bonded.

The protein belongs to the peptidase S1 family.

Its subcellular location is the secreted. Functionally, broad substrate specificity. The protein is Serine protease 2 of Streptomyces fradiae (Streptomyces roseoflavus).